The sequence spans 403 residues: Beta-galactoside alpha-2,6-sialyltransferase 1 (403 aa).

The Cytoplasmic segment spans residues 1 to 9 (MIHTNLKRK). The helical; Signal-anchor for type II membrane protein transmembrane segment at 10–26 (FSCFVLVFLLFAIICVW) threads the bilayer. The Lumenal segment spans residues 27–403 (KKGSDYEALT…TLSGFRNNRC (377 aa)). 3 disulfide bridges follow: Cys-139–Cys-403, Cys-181–Cys-332, and Cys-350–Cys-361. 2 N-linked (GlcNAc...) asparagine glycosylation sites follow: Asn-146 and Asn-158. Substrate is bound by residues Ser-186, Asn-209, Asn-230, 319–321 (SSG), Cys-350, Tyr-351, Thr-362, Tyr-366, His-367, and Lys-373. Tyr-366 carries the post-translational modification Phosphotyrosine.

The protein belongs to the glycosyltransferase 29 family. Monomer and homodimer. In terms of processing, N-glycosylated.

The protein resides in the golgi apparatus. It localises to the golgi stack membrane. The protein localises to the secreted. The enzyme catalyses a beta-D-galactoside + CMP-N-acetyl-beta-neuraminate = an N-acetyl-alpha-neuraminyl-(2-&gt;6)-beta-D-galactosyl derivative + CMP + H(+). The protein operates within protein modification; protein glycosylation. Functionally, transfers sialic acid from CMP-sialic acid to galactose-containing acceptor substrates. In Mus musculus (Mouse), this protein is Beta-galactoside alpha-2,6-sialyltransferase 1 (St6gal1).